The primary structure comprises 134 residues: Small ribosomal subunit protein uS11 (134 aa).

It belongs to the universal ribosomal protein uS11 family. In terms of assembly, part of the 30S ribosomal subunit. Interacts with proteins S7 and S18. Binds to IF-3.

Functionally, located on the platform of the 30S subunit, it bridges several disparate RNA helices of the 16S rRNA. Forms part of the Shine-Dalgarno cleft in the 70S ribosome. This is Small ribosomal subunit protein uS11 from Delftia acidovorans (strain DSM 14801 / SPH-1).